Consider the following 177-residue polypeptide: R-phycoerythrin beta chain (177 aa).

Cys50 and Cys61 together coordinate phycourobilin. The residue at position 72 (Asn72) is an N4-methylasparagine. Cys82 and Cys158 together coordinate (2R,3E)-phycoerythrobilin.

This sequence belongs to the phycobiliprotein family. In terms of assembly, heterodimer of an alpha and a beta chain. Post-translationally, contains two covalently linked phycoerythrobilin chromophores and one covalently linked phycourobilin chromophore.

It localises to the plastid. Its subcellular location is the chloroplast thylakoid membrane. Functionally, light-harvesting photosynthetic bile pigment-protein from the phycobiliprotein complex. The chain is R-phycoerythrin beta chain (cpeB) from Porphyra purpurea (Red seaweed).